We begin with the raw amino-acid sequence, 132 residues long: Small ribosomal subunit protein eS6 (132 aa).

The protein belongs to the eukaryotic ribosomal protein eS6 family.

The chain is Small ribosomal subunit protein eS6 from Methanoculleus marisnigri (strain ATCC 35101 / DSM 1498 / JR1).